A 318-amino-acid polypeptide reads, in one-letter code: 2-keto-3-deoxygluconate permease (318 aa).

10 helical membrane-spanning segments follow: residues 10–30 (LPGGMMLVPLLLGALCHTLWP), 42–62 (GLISGTVPILAVWFFCMGATI), 82–102 (IAVAWLVAVLCAPLLPIGGVS), 109–129 (LSVLALVAAMDMTNGGLYAAL), 139–159 (AGAVVLMSLESGPLISMLILG), 163–183 (LASFEPQLFVGAVLPLLLGFA), 201–221 (TLVPFFGFALGNTLDLSTIAH), 224–244 (TSGVLLGVAVVVITGLPLLLA), 257–277 (VAASSTAGAAVATPALIAGMA), and 289–309 (ALVASAVIVTSLLVPLLTALY).

Belongs to the KdgT transporter family.

The protein localises to the cell inner membrane. The catalysed reaction is 2-dehydro-3-deoxy-D-gluconate(in) + H(+)(in) = 2-dehydro-3-deoxy-D-gluconate(out) + H(+)(out). Functionally, catalyzes the proton-dependent uptake of 2-keto-3-deoxygluconate (KDG) into the cell. The protein is 2-keto-3-deoxygluconate permease of Xanthomonas axonopodis pv. citri (strain 306).